The following is a 396-amino-acid chain: Pinosylvin synthase 1 (396 aa).

Residue 60 to 63 coordinates substrate; it reads KFKR. Residue C170 is part of the active site. Substrate is bound by residues L273 and 311 to 313; that span reads GGH.

Belongs to the thiolase-like superfamily. Chalcone/stilbene synthases family. In terms of assembly, homodimer.

It localises to the cytoplasm. It carries out the reaction (E)-cinnamoyl-CoA + 3 malonyl-CoA + 3 H(+) = (E)-pinosylvin + 4 CO2 + 4 CoA. The enzyme catalyses 3-phenylpropanoyl-CoA + 3 malonyl-CoA + 3 H(+) = dihydropinosylvin + 4 CO2 + 4 CoA. The protein operates within phytoalexin biosynthesis; pinosylvin biosynthesis. Catalyzes the production of pinosylvin from cinnamoyl-CoA and malonyl-CoA, and dihydropinosylvin from dihydrocinnamoyl-CoA. The sequence is that of Pinosylvin synthase 1 from Pinus strobus (Eastern white pine).